We begin with the raw amino-acid sequence, 138 residues long: SPbeta prophage-derived uncharacterized protein YopJ (138 aa).

The chain is SPbeta prophage-derived uncharacterized protein YopJ (yopJ) from Bacillus subtilis (strain 168).